The primary structure comprises 433 residues: Enolase (433 aa).

Glutamine 167 is a (2R)-2-phosphoglycerate binding site. Glutamate 209 functions as the Proton donor in the catalytic mechanism. Residues aspartate 246, glutamate 291, and aspartate 318 each coordinate Mg(2+). Residues lysine 343, arginine 372, serine 373, and lysine 394 each coordinate (2R)-2-phosphoglycerate. Lysine 343 functions as the Proton acceptor in the catalytic mechanism.

This sequence belongs to the enolase family. In terms of assembly, component of the RNA degradosome, a multiprotein complex involved in RNA processing and mRNA degradation. It depends on Mg(2+) as a cofactor.

The protein resides in the cytoplasm. It localises to the secreted. The protein localises to the cell surface. The enzyme catalyses (2R)-2-phosphoglycerate = phosphoenolpyruvate + H2O. Its pathway is carbohydrate degradation; glycolysis; pyruvate from D-glyceraldehyde 3-phosphate: step 4/5. Catalyzes the reversible conversion of 2-phosphoglycerate (2-PG) into phosphoenolpyruvate (PEP). It is essential for the degradation of carbohydrates via glycolysis. This Marinomonas sp. (strain MWYL1) protein is Enolase.